A 354-amino-acid polypeptide reads, in one-letter code: 2-methylisoborneol synthase (354 aa).

Positions 1 to 29 (MIELIGHETPVPSQQQHTGGVRGTSACTP) are disordered. Positions 113, 114, 118, 264, 268, and 272 each coordinate Mg(2+).

Belongs to the terpene synthase family. 2-methylisoborneol synthase subfamily. Mg(2+) is required as a cofactor.

The enzyme catalyses (E)-2-methylgeranyl diphosphate + H2O = 2-methylisoborneol + diphosphate. Catalyzes the cyclization of 2-methylgeranyl diphosphate (2-MeGPP) to 2-methylisoborneol (2-MIB), which likely involves the intermediacy of 2-methyllinalyl diphosphate. This is 2-methylisoborneol synthase from Saccharopolyspora erythraea (strain ATCC 11635 / DSM 40517 / JCM 4748 / NBRC 13426 / NCIMB 8594 / NRRL 2338).